The primary structure comprises 1498 residues: Golgin subfamily A member 3 (1498 aa).

At methionine 1 the chain carries N-acetylmethionine. The segment at 1-118 (MDGASAEQDG…GTSAEGSVRK (118 aa)) is disordered. A Phosphoserine modification is found at serine 18. Residues 27-36 (PLKPPGPLVP) show a composition bias toward pro residues. The residue at position 57 (serine 57) is a Phosphoserine. Residues 71–81 (PTPPFPDPPSS) show a composition bias toward pro residues. The interval 121–141 (LQSLRLSLPMQETQLCSTDSP) is interaction with GOPC. Disordered stretches follow at residues 166 to 195 (RVKR…MLNP) and 216 to 325 (SVPR…SAST). The golgi-targeting domain stretch occupies residues 172–257 (ERSSQPATKT…DYRTEDSNAG (86 aa)). Composition is skewed to polar residues over residues 173-184 (RSSQPATKTRLF) and 269-291 (TKGS…SLSP). Serine 272 is subject to Phosphoserine. Low complexity predominate over residues 315-324 (SDSSSYSSAS). Serine 385, serine 389, and serine 465 each carry phosphoserine. Residues 394–1459 (VSLESSAAET…ALTVHESLSS (1066 aa)) are a coiled coil. The segment covering 789-801 (KEELDRGARRLEE) has biased composition (basic and acidic residues). Disordered regions lie at residues 789-809 (KEEL…TSET), 974-993 (QKQK…KEMK), 1376-1400 (RGAA…PIKI), and 1440-1498 (DSLQ…GPGE). A Phosphoserine modification is found at serine 983. Residues 1376 to 1387 (RGAAKTRKEPKG) are compositionally biased toward basic and acidic residues. Position 1392 is a phosphoserine (serine 1392). Over residues 1440–1452 (DSLQRQMEEHALT) the composition is skewed to basic and acidic residues.

In terms of assembly, homodimer. Interacts with GOLGA7. Isoform 1 interacts with GOPC while isoform 3 does not. Post-translationally, cleaved by caspases in apoptotic cells. In terms of tissue distribution, expressed in all tissues tested. Expressed in liver, testis, lung, heart, salivary gland and kidney.

The protein localises to the cytoplasm. Its subcellular location is the golgi apparatus. The protein resides in the golgi stack membrane. In terms of biological role, golgi auto-antigen; probably involved in maintaining Golgi structure. The polypeptide is Golgin subfamily A member 3 (GOLGA3) (Homo sapiens (Human)).